Here is a 523-residue protein sequence, read N- to C-terminus: ATP synthase subunit beta, mitochondrial (523 aa).

Residues 1 to 19 constitute a mitochondrion transit peptide; sequence MFSRVAKTSFSAVRAAKSQ. An ATP-binding site is contributed by 201–208; it reads GGAGVGKT.

Belongs to the ATPase alpha/beta chains family. As to quaternary structure, F-type ATPases have 2 components, CF(1) - the catalytic core - and CF(0) - the membrane proton channel. CF(1) has five subunits: alpha(3), beta(3), gamma(1), delta(1), epsilon(1). CF(0) has three main subunits: a, b and c.

The protein localises to the mitochondrion. Its subcellular location is the mitochondrion inner membrane. The enzyme catalyses ATP + H2O + 4 H(+)(in) = ADP + phosphate + 5 H(+)(out). Mitochondrial membrane ATP synthase (F(1)F(0) ATP synthase or Complex V) produces ATP from ADP in the presence of a proton gradient across the membrane which is generated by electron transport complexes of the respiratory chain. F-type ATPases consist of two structural domains, F(1) - containing the extramembraneous catalytic core, and F(0) - containing the membrane proton channel, linked together by a central stalk and a peripheral stalk. During catalysis, ATP synthesis in the catalytic domain of F(1) is coupled via a rotary mechanism of the central stalk subunits to proton translocation. Subunits alpha and beta form the catalytic core in F(1). Rotation of the central stalk against the surrounding alpha(3)beta(3) subunits leads to hydrolysis of ATP in three separate catalytic sites on the beta subunits. In Hemicentrotus pulcherrimus (Sea urchin), this protein is ATP synthase subunit beta, mitochondrial.